The primary structure comprises 150 residues: UPF0178 protein Rru_A0086 (150 aa).

It belongs to the UPF0178 family.

The polypeptide is UPF0178 protein Rru_A0086 (Rhodospirillum rubrum (strain ATCC 11170 / ATH 1.1.1 / DSM 467 / LMG 4362 / NCIMB 8255 / S1)).